A 145-amino-acid polypeptide reads, in one-letter code: Transcription antitermination protein NusB (145 aa).

It belongs to the NusB family.

In terms of biological role, involved in transcription antitermination. Required for transcription of ribosomal RNA (rRNA) genes. Binds specifically to the boxA antiterminator sequence of the ribosomal RNA (rrn) operons. This is Transcription antitermination protein NusB from Burkholderia vietnamiensis (strain G4 / LMG 22486) (Burkholderia cepacia (strain R1808)).